A 659-amino-acid chain; its full sequence is Heparin-sulfate lyase (659 aa).

A signal peptide spans 1–24 (MTTKIFKRIIVFAVIALSSGNILA). Y294 serves as the catalytic Proton acceptor.

This sequence belongs to the polysaccharide lyase 12 family.

It is found in the periplasm. The enzyme catalyses Elimination of sulfate, appears to act on linkages between N-acetyl-D-glucosamine and uronate. Product is an unsaturated sugar.. Its function is as follows. Specifically cleaves heparan sulfate-rich regions of acidic polysaccharides. Does not act on N,O-desulfated glucosamine or N-acetyl-O-sulfated glucosamine linkages. Functions in cleaving metazoan heparan sulfate and providing carbon, nitrogen and sulfate sources for microorganisms. The polypeptide is Heparin-sulfate lyase (hepC) (Pedobacter heparinus (strain ATCC 13125 / DSM 2366 / CIP 104194 / JCM 7457 / NBRC 12017 / NCIMB 9290 / NRRL B-14731 / HIM 762-3)).